We begin with the raw amino-acid sequence, 225 residues long: Chalcone--flavanone isomerase 3 (225 aa).

Positions 51, 116, and 193 each coordinate substrate.

This sequence belongs to the chalcone isomerase family.

It catalyses the reaction a chalcone = a flavanone.. It participates in secondary metabolite biosynthesis; flavonoid biosynthesis. Functionally, catalyzes the intramolecular cyclization of bicyclic chalcones into tricyclic (S)-flavanones. Responsible for the isomerization of 4,2',4',6'-tetrahydroxychalcone (also termed chalcone) into naringenin. The protein is Chalcone--flavanone isomerase 3 (CHI3) of Lotus japonicus (Lotus corniculatus var. japonicus).